The primary structure comprises 444 residues: N-succinylarginine dihydrolase (444 aa).

Substrate contacts are provided by residues 19–28 (AGLSFGNVAS), asparagine 110, and 137–138 (HR). Glutamate 174 is a catalytic residue. Arginine 214 is a substrate binding site. Residue histidine 250 is part of the active site. Aspartate 252 and asparagine 362 together coordinate substrate. The active-site Nucleophile is the cysteine 368.

It belongs to the succinylarginine dihydrolase family. In terms of assembly, homodimer.

The enzyme catalyses N(2)-succinyl-L-arginine + 2 H2O + 2 H(+) = N(2)-succinyl-L-ornithine + 2 NH4(+) + CO2. The protein operates within amino-acid degradation; L-arginine degradation via AST pathway; L-glutamate and succinate from L-arginine: step 2/5. Its function is as follows. Catalyzes the hydrolysis of N(2)-succinylarginine into N(2)-succinylornithine, ammonia and CO(2). This chain is N-succinylarginine dihydrolase, found in Shewanella baltica (strain OS223).